The primary structure comprises 313 residues: Ketimine reductase mu-crystallin (313 aa).

Arg-47 contributes to the 3,3',5-triiodo-L-thyronine binding site. NADPH is bound by residues Ser-90, His-91, Arg-118, Ala-143, Val-145, Gln-146, Asn-167, Arg-168, Thr-169, Asn-172, Thr-204, Met-205, and Val-225. Residue Glu-256 participates in 3,3',5-triiodo-L-thyronine binding. Ser-291 is a binding site for NADPH.

Belongs to the ornithine cyclodeaminase/mu-crystallin family. In terms of assembly, homodimer. Binds the thyroid hormone triiodothyronine (T3); T3 binding inhibits enzymatic activity.

Its subcellular location is the cytoplasm. The catalysed reaction is L-pipecolate + NADP(+) = Delta(1)-piperideine-2-carboxylate + NADPH + H(+). It carries out the reaction L-pipecolate + NAD(+) = Delta(1)-piperideine-2-carboxylate + NADH + H(+). The enzyme catalyses L-proline + NADP(+) = 1-pyrroline-2-carboxylate + NADPH + H(+). It catalyses the reaction L-proline + NAD(+) = 1-pyrroline-2-carboxylate + NADH + H(+). The catalysed reaction is (3R)-1,4-thiomorpholine-3-carboxylate + NAD(+) = 3,4-dehydrothiomorpholine-3-carboxylate + NADH + 2 H(+). It carries out the reaction (3R)-1,4-thiomorpholine-3-carboxylate + NADP(+) = 3,4-dehydrothiomorpholine-3-carboxylate + NADPH + 2 H(+). The enzyme catalyses (S)-cystathionine ketimine + NADH + 2 H(+) = (3R,5S)-2,3,5,6,7-pentahydro-1,4-thiazepine-3,5-dicarboxylate + NAD(+). It catalyses the reaction (S)-cystathionine ketimine + NADPH + 2 H(+) = (3R,5S)-2,3,5,6,7-pentahydro-1,4-thiazepine-3,5-dicarboxylate + NADP(+). The catalysed reaction is (R)-lanthionine ketimine + NADPH + 2 H(+) = (3R,5R)-1,4-thiomorpholine-3,5-dicarboxylate + NADP(+). It carries out the reaction Delta(2)-thiazoline-2-carboxylate + NADPH + 2 H(+) = L-thiazolidine-2-carboxylate + NADP(+). Catalyzes the NAD(P)H-dependent reduction of imine double bonds of a number of cyclic ketimine substrates, including sulfur-containing cyclic ketimines. Under physiological conditions, it efficiently catalyzes delta(1)-piperideine-2-carboxylate (P2C) and delta(1)-pyrroline-2-carboxylate (Pyr2C) reduction, suggesting a central role in lysine and glutamate metabolism. Additional substrates are delta(2)-thiazoline-2-carboxylate (T2C), 3,4-dehydrothiomorpholine-3-carboxylate (AECK), and (R)-lanthionine ketimine (LK) that is reduced at very low rate compared to other substrates. Also catalyzes the NAD(P)H-dependent reduction of (S)-cystathionine ketimine (CysK). The chain is Ketimine reductase mu-crystallin from Rattus norvegicus (Rat).